We begin with the raw amino-acid sequence, 486 residues long: NGFI-A-binding protein 1 (486 aa).

An NCD1 region spans residues 4–82 (ALPRTLGELQ…RDWVTNPGLF (79 aa)). Glycyl lysine isopeptide (Lys-Gly) (interchain with G-Cter in SUMO2) cross-links involve residues Lys-126, Lys-129, and Lys-143. Positions 160-187 (WQGHHATESEHSLSPADLGSPASPKESS) are disordered. Phosphoserine occurs at positions 171 and 182. A Glycyl lysine isopeptide (Lys-Gly) (interchain with G-Cter in SUMO2) cross-link involves residue Lys-211. Positions 220 to 309 (LLKNNKKLAK…ARQVSREVTY (90 aa)) are NCD2. The interval 306–337 (EVTYKYTYRTTRLKCGERDELSPKRIKIEDGF) is necessary for nuclear localization. At Ser-327 the chain carries Phosphoserine. Residue Lys-332 forms a Glycyl lysine isopeptide (Lys-Gly) (interchain with G-Cter in SUMO1); alternate linkage. Residue Lys-332 forms a Glycyl lysine isopeptide (Lys-Gly) (interchain with G-Cter in SUMO2); alternate linkage. Residues Lys-354, Lys-368, and Lys-372 each participate in a glycyl lysine isopeptide (Lys-Gly) (interchain with G-Cter in SUMO2) cross-link. The interval 398 to 438 (RQSSGEQSPDGGLPSDSSDGQGERPLNLRIPSVQNRQPHHF) is disordered. Residues 404–417 (QSPDGGLPSDSSDG) show a composition bias toward low complexity. Ser-405 carries the phosphoserine modification. Glycyl lysine isopeptide (Lys-Gly) (interchain with G-Cter in SUMO2) cross-links involve residues Lys-453, Lys-464, and Lys-476. Residue Lys-479 forms a Glycyl lysine isopeptide (Lys-Gly) (interchain with G-Cter in SUMO1); alternate linkage. Lys-479 participates in a covalent cross-link: Glycyl lysine isopeptide (Lys-Gly) (interchain with G-Cter in SUMO2); alternate.

It belongs to the NAB family. Homomultimers may associate with EGR1 bound to DNA. In terms of tissue distribution, widely expressed in adult. In day 16 embryo highest levels in forebrain, thymus, salivary gland and cartilage.

It is found in the nucleus. Acts as a transcriptional repressor for zinc finger transcription factors EGR1 and EGR2. This is NGFI-A-binding protein 1 (Nab1) from Mus musculus (Mouse).